Reading from the N-terminus, the 619-residue chain is Guanylate cyclase soluble subunit beta-1 (619 aa).

His105 is a heme binding site. One can recognise a Guanylate cyclase domain in the interval 421–554 (TILFSGIVGF…NTVNLTSRTE (134 aa)).

It belongs to the adenylyl cyclase class-4/guanylyl cyclase family. As to quaternary structure, the active enzyme is formed by a heterodimer of an alpha and a beta subunit. Homotetramer; dimer of dimers (in vitro). Heterodimer with GUCY1A1. Can also form inactive homodimers in vitro. Requires heme as cofactor. In terms of tissue distribution, lung and brain.

Its subcellular location is the cytoplasm. The enzyme catalyses GTP = 3',5'-cyclic GMP + diphosphate. Its activity is regulated as follows. Activated by nitric oxide in the presence of magnesium or manganese ions. Functionally, mediates responses to nitric oxide (NO) by catalyzing the biosynthesis of the signaling molecule cGMP. This Rattus norvegicus (Rat) protein is Guanylate cyclase soluble subunit beta-1 (Gucy1b1).